A 490-amino-acid polypeptide reads, in one-letter code: Aspartyl/glutamyl-tRNA(Asn/Gln) amidotransferase subunit B (490 aa).

It belongs to the GatB/GatE family. GatB subfamily. As to quaternary structure, heterotrimer of A, B and C subunits.

The enzyme catalyses L-glutamyl-tRNA(Gln) + L-glutamine + ATP + H2O = L-glutaminyl-tRNA(Gln) + L-glutamate + ADP + phosphate + H(+). It catalyses the reaction L-aspartyl-tRNA(Asn) + L-glutamine + ATP + H2O = L-asparaginyl-tRNA(Asn) + L-glutamate + ADP + phosphate + 2 H(+). Allows the formation of correctly charged Asn-tRNA(Asn) or Gln-tRNA(Gln) through the transamidation of misacylated Asp-tRNA(Asn) or Glu-tRNA(Gln) in organisms which lack either or both of asparaginyl-tRNA or glutaminyl-tRNA synthetases. The reaction takes place in the presence of glutamine and ATP through an activated phospho-Asp-tRNA(Asn) or phospho-Glu-tRNA(Gln). In Burkholderia pseudomallei (strain K96243), this protein is Aspartyl/glutamyl-tRNA(Asn/Gln) amidotransferase subunit B.